Consider the following 505-residue polypeptide: Lysine--tRNA ligase (505 aa).

2 residues coordinate Mg(2+): Glu415 and Glu422.

The protein belongs to the class-II aminoacyl-tRNA synthetase family. In terms of assembly, homodimer. It depends on Mg(2+) as a cofactor.

It localises to the cytoplasm. The enzyme catalyses tRNA(Lys) + L-lysine + ATP = L-lysyl-tRNA(Lys) + AMP + diphosphate. In Vibrio parahaemolyticus serotype O3:K6 (strain RIMD 2210633), this protein is Lysine--tRNA ligase.